The primary structure comprises 61 residues: Temporin-SN2 (61 aa).

An N-terminal signal peptide occupies residues 1–22; sequence MFTLKKTLLLLFFLGTINLSLC. Residues 23–44 constitute a propeptide, removed in mature form; it reads EEERNAEEERRDGDDEMDVEVK. Lysine amide is present on K61.

The protein belongs to the frog skin active peptide (FSAP) family. Temporin subfamily. As to expression, expressed by the skin glands.

Its subcellular location is the secreted. In terms of biological role, antimicrobial peptide. Active against some Gram-positive and Gram-negative bacterial strains. Active against fungus C.glabrata 090902 but not against C.albicans ATCC 12231. Shows very weak hemolytic activity against human erythrocytes. The polypeptide is Temporin-SN2 (Sylvirana spinulosa (Fine-spined frog)).